The primary structure comprises 518 residues: 3-octaprenyl-4-hydroxybenzoate carboxy-lyase (518 aa).

A Mn(2+)-binding site is contributed by Asn-177. Prenylated FMN-binding positions include 180–182 (IYR), 194–196 (RWL), and 199–200 (RG). Position 243 (Glu-243) interacts with Mn(2+). Asp-318 functions as the Proton donor in the catalytic mechanism.

It belongs to the UbiD family. In terms of assembly, homohexamer. Requires prenylated FMN as cofactor. The cofactor is Mn(2+).

The protein resides in the cell membrane. It carries out the reaction a 4-hydroxy-3-(all-trans-polyprenyl)benzoate + H(+) = a 2-(all-trans-polyprenyl)phenol + CO2. The protein operates within cofactor biosynthesis; ubiquinone biosynthesis. Its function is as follows. Catalyzes the decarboxylation of 3-octaprenyl-4-hydroxy benzoate to 2-octaprenylphenol, an intermediate step in ubiquinone biosynthesis. The sequence is that of 3-octaprenyl-4-hydroxybenzoate carboxy-lyase from Burkholderia multivorans (strain ATCC 17616 / 249).